Here is a 567-residue protein sequence, read N- to C-terminus: Glucose-6-phosphate isomerase, cytosolic B (567 aa).

Residues 156–157 (GS), 212–217 (SKTFTT), glutamine 356, glutamate 360, histidine 391, and lysine 516 each bind D-glucose 6-phosphate. Residue glutamate 360 is the Proton donor of the active site. Residues histidine 391 and lysine 516 contribute to the active site.

The protein belongs to the GPI family. Homodimer.

It is found in the cytoplasm. It carries out the reaction alpha-D-glucose 6-phosphate = beta-D-fructose 6-phosphate. The protein operates within carbohydrate degradation; glycolysis; D-glyceraldehyde 3-phosphate and glycerone phosphate from D-glucose: step 2/4. Its function is as follows. Catalyzes the conversion of glucose-6-phosphate to fructose-6-phosphate, the second step in glycolysis, and the reverse reaction during gluconeogenesis. This is Glucose-6-phosphate isomerase, cytosolic B from Oryza sativa subsp. japonica (Rice).